A 390-amino-acid polypeptide reads, in one-letter code: Two-component response regulator ORR29 (390 aa).

In terms of domain architecture, Response regulatory spans 13–130; that stretch reads SAMVIDEDKC…TIKNLWQYVD (118 aa). A 4-aspartylphosphate modification is found at Asp-65. The segment at residues 169–226 is a DNA-binding region (myb-like GARP); sequence KKYYLMWTPHLQKKFLHALQILGKDASPKNIKKIMGVDNIDCRQIAAHLQKHRLRLTK. 2 disordered regions span residues 233 to 271 and 303 to 339; these read FTTD…QPTE and SKHS…SGDH. A compositionally biased stretch (polar residues) spans 257-271; sequence NASTLQPRSNTQPTE.

The protein belongs to the ARR family. Type-B subfamily. Two-component system major event consists of a His-to-Asp phosphorelay between a sensor histidine kinase (HK) and a response regulator (RR). In plants, the His-to-Asp phosphorelay involves an additional intermediate named Histidine-containing phosphotransfer protein (HPt). This multistep phosphorelay consists of a His-Asp-His-Asp sequential transfer of a phosphate group between first a His and an Asp of the HK protein, followed by the transfer to a conserved His of the HPt protein and finally the transfer to an Asp in the receiver domain of the RR protein.

It is found in the cytoplasm. It localises to the cytosol. The protein resides in the nucleus. Its function is as follows. Transcriptional activator that binds specific DNA sequence. Functions as a response regulator involved in His-to-Asp phosphorelay signal transduction system. Phosphorylation of the Asp residue in the receiver domain activates the ability of the protein to promote the transcription of target genes. May directly activate some type-A response regulators in response to cytokinins. Functions as a response regulator in response to cytokinins. This chain is Two-component response regulator ORR29, found in Oryza sativa subsp. japonica (Rice).